Here is a 352-residue protein sequence, read N- to C-terminus: Adenosine deaminase (352 aa).

An N-acetylalanine modification is found at Ala-2. Zn(2+) is bound by residues His-15 and His-17. Substrate contacts are provided by His-17 and Asp-19. Position 54 is an N6-acetyllysine (Lys-54). A substrate-binding site is contributed by Gly-184. His-214 contributes to the Zn(2+) binding site. The active-site Proton donor is Glu-217. Lys-232 carries the N6-acetyllysine modification. Position 295 (Asp-295) interacts with Zn(2+). Asp-296 serves as a coordination point for substrate.

It belongs to the metallo-dependent hydrolases superfamily. Adenosine and AMP deaminases family. Interacts with DPP4 (via extracellular domain). Interacts with PLG (via Kringle 4 domain); the interaction stimulates PLG activation when in complex with DPP4. Zn(2+) serves as cofactor. As to expression, detected in brain and liver (at protein level).

The protein resides in the cell membrane. It is found in the cell junction. The protein localises to the cytoplasmic vesicle lumen. Its subcellular location is the cytoplasm. It localises to the lysosome. It carries out the reaction adenosine + H2O + H(+) = inosine + NH4(+). It catalyses the reaction 2'-deoxyadenosine + H2O + H(+) = 2'-deoxyinosine + NH4(+). The enzyme catalyses cordycepin + H2O + H(+) = 3'-deoxyinosine + NH4(+). Catalyzes the hydrolytic deamination of adenosine and 2-deoxyadenosine. Plays an important role in purine metabolism and in adenosine homeostasis. Modulates signaling by extracellular adenosine, and so contributes indirectly to cellular signaling events. Acts as a positive regulator of T-cell coactivation, by binding DPP4. Its interaction with DPP4 regulates lymphocyte-epithelial cell adhesion. Enhances dendritic cell immunogenicity by affecting dendritic cell costimulatory molecule expression and cytokines and chemokines secretion. Enhances CD4+ T-cell differentiation and proliferation. Acts as a positive modulator of adenosine receptors ADORA1 and ADORA2A, by enhancing their ligand affinity via conformational change. Stimulates plasminogen activation. Plays a role in male fertility. Plays a protective role in early postimplantation embryonic development. Also responsible for the deamination of cordycepin (3'-deoxyadenosine), a fungal natural product that shows antitumor, antibacterial, antifungal, antivirus, and immune regulation properties. The chain is Adenosine deaminase (Ada) from Rattus norvegicus (Rat).